The chain runs to 223 residues: RNA-free ribonuclease P (223 aa).

The protein belongs to the HARP family.

The enzyme catalyses Endonucleolytic cleavage of RNA, removing 5'-extranucleotides from tRNA precursor.. In terms of biological role, RNA-free RNase P that catalyzes the removal of the 5'-leader sequence from pre-tRNA to produce the mature 5'-terminus. In Methanococcus vannielii (strain ATCC 35089 / DSM 1224 / JCM 13029 / OCM 148 / SB), this protein is RNA-free ribonuclease P.